The sequence spans 156 residues: Small ribosomal subunit protein uS7 (156 aa).

It belongs to the universal ribosomal protein uS7 family. As to quaternary structure, part of the 30S ribosomal subunit. Contacts proteins S9 and S11.

In terms of biological role, one of the primary rRNA binding proteins, it binds directly to 16S rRNA where it nucleates assembly of the head domain of the 30S subunit. Is located at the subunit interface close to the decoding center, probably blocks exit of the E-site tRNA. The protein is Small ribosomal subunit protein uS7 of Pelagibacter ubique (strain HTCC1062).